A 22-amino-acid chain; its full sequence is KISTGFTPFAGNGFTXITEYGP.

Belongs to the PsbP family.

Its subcellular location is the plastid. It is found in the chloroplast thylakoid membrane. In terms of biological role, may be involved in the regulation of photosystem II. In Physcomitrium patens (Spreading-leaved earth moss), this protein is Oxygen-evolving enhancer protein 2.